Consider the following 258-residue polypeptide: Large ribosomal subunit protein uL5c (258 aa).

A chloroplast-targeting transit peptide spans 1 to 38 (MASTSLLQSTSSSFAGVRFHCRTSAAPRVGLSSFTVKA).

As to quaternary structure, component of the chloroplast large ribosomal subunit (LSU). Mature 70S chloroplast ribosomes of higher plants consist of a small (30S) and a large (50S) subunit. The 30S small subunit contains 1 molecule of ribosomal RNA (16S rRNA) and 24 different proteins. The 50S large subunit contains 3 rRNA molecules (23S, 5S and 4.5S rRNA) and 33 different proteins.

Its subcellular location is the plastid. The protein resides in the chloroplast. Functionally, component of the chloroplast ribosome (chloro-ribosome), a dedicated translation machinery responsible for the synthesis of chloroplast genome-encoded proteins, including proteins of the transcription and translation machinery and components of the photosynthetic apparatus. The sequence is that of Large ribosomal subunit protein uL5c (RPL5) from Spinacia oleracea (Spinach).